Consider the following 738-residue polypeptide: MRGPSGALWLLLALRTVLGGMEVRWCATSDPEQHKCGNMSEAFREAGIQPSLLCVRGTSADHCVQLIAAQEADAITLDGGAIYEAGKEHGLKPVVGEVYDQEVGTSYYAVAVVRRSSHVTIDTLKGVKSCHTGINRTVGWNVPVGYLVESGRLSVMGCDVLKAVSDYFGGSCVPGAGETSYSESLCRLCRGDSSGEGVCDKSPLERYYDYSGAFRCLAEGAGDVAFVKHSTVLENTDGKTLPSWGQALLSQDFELLCRDGSRADVTEWRQCHLARVPAHAVVVRADTDGGLIFRLLNEGQRLFSHEGSSFQMFSSEAYGQKDLLFKDSTSELVPIATQTYEAWLGHEYLHAMKGLLCDPNRLPPYLRWCVLSTPEIQKCGDMAVAFRRQRLKPEIQCVSAKSPQHCMERIQAEQVDAVTLSGEDIYTAGKTYGLVPAAGEHYAPEDSSNSYYVVAVVRRDSSHAFTLDELRGKRSCHAGFGSPAGWDVPVGALIQRGFIRPKDCDVLTAVSEFFNASCVPVNNPKNYPSSLCALCVGDEQGRNKCVGNSQERYYGYRGAFRCLVENAGDVAFVRHTTVFDNTNGHNSEPWAAELRSEDYELLCPNGARAEVSQFAACNLAQIPPHAVMVRPDTNIFTVYGLLDKAQDLFGDDHNKNGFKMFDSSNYHGQDLLFKDATVRAVPVGEKTTYRGWLGLDYVAALEGMSSQQCSGAAAPAPGAPLLPLLLPALAARLLPPAL.

An N-terminal signal peptide occupies residues 1–19 (MRGPSGALWLLLALRTVLG). Residues 20–30 (GMEVRWCATSD) form an antigenic epitope region. 2 Transferrin-like domains span residues 23–357 (VRWC…GLLC) and 366–706 (LRWC…GMSS). Intrachain disulfides connect C26-C63 and C36-C54. An N-linked (GlcNAc...) asparagine glycan is attached at N38. Residues D78 and Y107 each coordinate Fe(3+). 4 cysteine pairs are disulfide-bonded: C130-C216, C172-C189, C186-C199, and C257-C271. T132 serves as a coordination point for hydrogencarbonate. N135 carries N-linked (GlcNAc...) asparagine glycosylation. The hydrogencarbonate site is built by R136, V138, and G139. Y210 lines the Fe(3+) pocket. Fe(3+) contacts are provided by H279, S421, and Y451. S462 carries the phosphoserine; by FAM20C modification. N515 carries N-linked (GlcNAc...) asparagine glycosylation. 2 residues coordinate Fe(3+): Y556 and H625. C709 carries the GPI-anchor amidated cysteine lipid modification. Residues 710-738 (SGAAAPAPGAPLLPLLLPALAARLLPPAL) constitute a propeptide, removed in mature form.

The protein belongs to the transferrin family. Found predominantly in human melanomas and in certain fetal tissues; also found in liver, epithelium, umbilical chord, placenta and sweat gland ducts.

Its subcellular location is the cell membrane. In terms of biological role, involved in iron cellular uptake. Seems to be internalized and then recycled back to the cell membrane. Binds a single atom of iron per subunit. Could also bind zinc. The sequence is that of Melanotransferrin from Homo sapiens (Human).